The chain runs to 197 residues: uncharacterized protein (197 aa).

Residues 1–23 form the signal peptide; that stretch reads MSARAPKELRLALPPCLLNRTFA. 2 N-linked (GlcNAc...) asparagine glycosylation sites follow: asparagine 19 and asparagine 26. The Extracellular portion of the chain corresponds to 24-61; it reads SPNASGSGNTGARGPGAGGSGTCITQVGQQLFQSFSST. A helical membrane pass occupies residues 62–82; sequence LVLIVLVTLIFCLIVLSLSTF. Residues 83 to 197 lie on the Cytoplasmic side of the membrane; the sequence is HIHKRRMKKR…EGLLQTVVLS (115 aa). Positions 94-180 are disordered; it reads MQRAQEEYER…SSPQGAHAAS (87 aa). 2 stretches are compositionally biased toward basic and acidic residues: residues 96-107 and 125-136; these read RAQEEYERDHCS and HTKETRLERQPR. A compositionally biased stretch (low complexity) spans 147–161; sequence SSSSSSSPGLLCQGP. The span at 162 to 171 shows a compositional bias: pro residues; that stretch reads CAPPPPPPAS.

The protein localises to the membrane. This is an uncharacterized protein from Macaca fascicularis (Crab-eating macaque).